The sequence spans 423 residues: Peroxisomal membrane protein PMP47A (423 aa).

Solcar repeat units follow at residues Tyr-6 to Thr-120, Leu-142 to Phe-230, and Ile-239 to Leu-373. A helical transmembrane segment spans residues Ala-12–Leu-32. Over residues Lys-43–Ser-53 the composition is skewed to basic and acidic residues. Residues Lys-43–Ser-70 are disordered. Over residues Glu-55–Ser-70 the composition is skewed to polar residues. Helical transmembrane passes span Ser-98–Gly-118, Met-148–Ala-168, Phe-204–Phe-224, and Leu-245–Leu-265. Residues Ser-278–Lys-308 form a disordered region. Residues Leu-353–Leu-373 form a helical membrane-spanning segment.

This sequence belongs to the mitochondrial carrier (TC 2.A.29) family.

The protein resides in the peroxisome membrane. In terms of biological role, may have transport activity. The sequence is that of Peroxisomal membrane protein PMP47A (PMP47A) from Candida boidinii (Yeast).